The primary structure comprises 312 residues: Lipoyl synthase (312 aa).

7 residues coordinate [4Fe-4S] cluster: Cys37, Cys42, Cys48, Cys67, Cys71, Cys74, and Ser281. Residues 52-270 (RDGPGTATFM…AVAEREFDFL (219 aa)) form the Radical SAM core domain.

The protein belongs to the radical SAM superfamily. Lipoyl synthase family. It depends on [4Fe-4S] cluster as a cofactor.

The protein resides in the cytoplasm. The enzyme catalyses [[Fe-S] cluster scaffold protein carrying a second [4Fe-4S](2+) cluster] + N(6)-octanoyl-L-lysyl-[protein] + 2 oxidized [2Fe-2S]-[ferredoxin] + 2 S-adenosyl-L-methionine + 4 H(+) = [[Fe-S] cluster scaffold protein] + N(6)-[(R)-dihydrolipoyl]-L-lysyl-[protein] + 4 Fe(3+) + 2 hydrogen sulfide + 2 5'-deoxyadenosine + 2 L-methionine + 2 reduced [2Fe-2S]-[ferredoxin]. The protein operates within protein modification; protein lipoylation via endogenous pathway; protein N(6)-(lipoyl)lysine from octanoyl-[acyl-carrier-protein]: step 2/2. Its function is as follows. Catalyzes the radical-mediated insertion of two sulfur atoms into the C-6 and C-8 positions of the octanoyl moiety bound to the lipoyl domains of lipoate-dependent enzymes, thereby converting the octanoylated domains into lipoylated derivatives. The chain is Lipoyl synthase from Halorubrum lacusprofundi (strain ATCC 49239 / DSM 5036 / JCM 8891 / ACAM 34).